A 325-amino-acid chain; its full sequence is 7,8-didemethyl-8-hydroxy-5-deazariboflavin synthase (325 aa).

The region spanning M1–N241 is the Radical SAM core domain. [4Fe-4S] cluster-binding residues include C15, C19, and C22.

Belongs to the radical SAM superfamily. CofG family. In terms of assembly, consists of two subunits, CofG and CofH. [4Fe-4S] cluster serves as cofactor.

It catalyses the reaction 5-amino-5-(4-hydroxybenzyl)-6-(D-ribitylimino)-5,6-dihydrouracil + S-adenosyl-L-methionine = 7,8-didemethyl-8-hydroxy-5-deazariboflavin + 5'-deoxyadenosine + L-methionine + NH4(+) + H(+). The protein operates within cofactor biosynthesis; coenzyme F0 biosynthesis. In terms of biological role, catalyzes the radical-mediated synthesis of 7,8-didemethyl-8-hydroxy-5-deazariboflavin from 5-amino-5-(4-hydroxybenzyl)-6-(D-ribitylimino)-5,6-dihydrouracil. This is 7,8-didemethyl-8-hydroxy-5-deazariboflavin synthase from Methanosarcina barkeri (strain Fusaro / DSM 804).